We begin with the raw amino-acid sequence, 72 residues long: U10-myrmicitoxin-Tb1a (72 aa).

Residues 1–26 (MRVSYLSLTLTIVVVIAIIYAPETEA) form the signal peptide. Residues 27-36 (KAWADADAEA) constitute a propeptide that is removed on maturation.

The protein belongs to the formicidae venom precursor-01 superfamily. As to expression, expressed by the venom gland.

It is found in the secreted. In terms of biological role, in vivo, this neurotoxin paralyzes about 40% of blowflies (L.caesar) one hour after intrathoracic injection, when tested at high doses (28 nmol/g). This Tetramorium bicarinatum (Tramp ant) protein is U10-myrmicitoxin-Tb1a.